The chain runs to 468 residues: Phosphatidylinositol-binding clathrin assembly protein LAP (468 aa).

The 143-residue stretch at 16-158 (RHSLAGQGLA…LSYRAMAFDF (143 aa)) folds into the ENTH domain. The interval 438–468 (NAGDGTAKYDGGAGSSPFDWGATDDDGGAAQ) is disordered. Residues 459–468 (ATDDDGGAAQ) are compositionally biased toward acidic residues.

This sequence belongs to the PICALM/SNAP91 family. In terms of assembly, binds clathrin and phosphatidylinositol 4,5-bisphosphate. In terms of tissue distribution, in embryos, expression is seen in central and peripheral nervous systems (brain and ventral nerve cord) and Garland cells. Coexpressed with clathrin at presynaptic boutons of neuromuscular junctions.

It localises to the membrane. Its subcellular location is the clathrin-coated pit. It is found in the golgi apparatus. The protein localises to the cytoplasmic vesicle. The protein resides in the clathrin-coated vesicle. Its function is as follows. Assembly protein recruiting clathrin and adaptor protein complex 2 (AP2) to cell membranes at sites of coated-pit formation and clathrin-vesicle assembly. May be required to determine the amount of membrane to be recycled, possibly by regulating the size of the clathrin cage. Involved in AP2-dependent clathrin-mediated endocytosis at the neuromuscular junction. In Drosophila melanogaster (Fruit fly), this protein is Phosphatidylinositol-binding clathrin assembly protein LAP (lap).